A 103-amino-acid polypeptide reads, in one-letter code: Flagellar hook-basal body complex protein FliE (103 aa).

Belongs to the FliE family.

The protein resides in the bacterial flagellum basal body. The polypeptide is Flagellar hook-basal body complex protein FliE (Cronobacter sakazakii (strain ATCC BAA-894) (Enterobacter sakazakii)).